Reading from the N-terminus, the 474-residue chain is MVVGDISTGTDVAVVGAGPGGYVAAIRAGQLGLDVTLVEKDAYGGTCLNYGCIPSKAMITASGVAHEAGHAEEMGVYADPDVDVAEMVDWKDGVVDQLTGGVEKLCKANGVNLIEGRAEFAGSDKLRVVHGGDGQGSETIEYEHAIVSTGSRPIEVPGFDFGDDPVLDSRQALAMAELPSSMVIVGGGYIGMELSTVFAKLGVDVTVVEMLDGILPQYGDDIARPVRQRAEELGIDFHFGLAADSWTDTDDGIVVTAADEDGEETEFETEKVLVAVGRQPVTDTLNLDAVGLEPNDDGRLETDHEARTDVENVFAIGDVAPGPMLAHKASKEGEVAAEVIAGEPAALDYQAVPAAVFTDPEIGTVGLTEDDAAAQGFDPVVGTFPFNASGRALTTGHDDGFVEVVADEESGFLLGAQIVGPEASELVAELGLAIEMGATLEDVASTIHTHPTLSEATMEAAEHALGHAVHTLNR.

FAD contacts are provided by residues 39-47 (EKDAYGGTC), Lys-56, and Ala-118. Cys-47 and Cys-52 are oxidised to a cystine. NAD(+)-binding positions include 186-190 (GGGYI), Glu-209, and 275-278 (AVGR). Asp-318 and Ala-326 together coordinate FAD. Residue His-450 is the Proton acceptor of the active site.

This sequence belongs to the class-I pyridine nucleotide-disulfide oxidoreductase family. Homodimer. It depends on FAD as a cofactor.

It localises to the cytoplasm. It catalyses the reaction N(6)-[(R)-dihydrolipoyl]-L-lysyl-[protein] + NAD(+) = N(6)-[(R)-lipoyl]-L-lysyl-[protein] + NADH + H(+). The protein is Dihydrolipoyl dehydrogenase (lpdA) of Halobacterium salinarum (strain ATCC 700922 / JCM 11081 / NRC-1) (Halobacterium halobium).